The sequence spans 483 residues: Ero1-like protein (483 aa).

Residues 1-29 (MTTRTVQRNLWASAAVVLVLLLLWTDTTG) form the signal peptide. Disulfide bonds link cysteine 44-cysteine 57, cysteine 46-cysteine 55, cysteine 94-cysteine 402, cysteine 103-cysteine 108, cysteine 227-cysteine 251, and cysteine 405-cysteine 408. Residues arginine 206, threonine 208, and tryptophan 219 each contribute to the FAD site. An N-linked (GlcNAc...) asparagine glycan is attached at asparagine 232. FAD-binding residues include serine 262, histidine 265, and arginine 301. N-linked (GlcNAc...) asparagine glycosylation occurs at asparagine 395.

It belongs to the EROs family. In terms of assembly, may function both as a monomer and a homodimer. FAD is required as a cofactor.

The protein resides in the endoplasmic reticulum membrane. In terms of biological role, oxidoreductase involved in disulfide bond formation in the endoplasmic reticulum. Efficiently reoxidizes pdi-1, the enzyme catalyzing protein disulfide formation, in order to allow pdi-1 to sustain additional rounds of disulfide formation. Following pdi reoxidation, passes its electrons to molecular oxygen via FAD, leading to the production of reactive oxygen species (ROS) in the cell. The protein is Ero1-like protein (Ero1L) of Drosophila melanogaster (Fruit fly).